The following is a 596-amino-acid chain: Phosphoenolpyruvate carboxykinase [GTP] (596 aa).

Substrate contacts are provided by residues Arg-77 and Tyr-205–Gly-207. Residues Lys-214 and His-234 each contribute to the Mn(2+) site. Ser-256 provides a ligand contact to substrate. Residue Ala-257 to Asn-262 coordinates GTP. The active site involves Cys-258. Asp-283 is a Mn(2+) binding site. The tract at residues Lys-362–Pro-388 is disordered. Asn-373–Arg-375 serves as a coordination point for substrate. Residues Arg-375, Arg-406, and Tyr-499–Asn-502 each bind GTP.

It belongs to the phosphoenolpyruvate carboxykinase [GTP] family. Monomer. Mn(2+) is required as a cofactor.

The protein localises to the cytoplasm. The enzyme catalyses oxaloacetate + GTP = phosphoenolpyruvate + GDP + CO2. It functions in the pathway carbohydrate biosynthesis; gluconeogenesis. Its function is as follows. Catalyzes the conversion of oxaloacetate (OAA) to phosphoenolpyruvate (PEP), the rate-limiting step in the metabolic pathway that produces glucose from lactate and other precursors derived from the citric acid cycle. This Anaeromyxobacter dehalogenans (strain 2CP-1 / ATCC BAA-258) protein is Phosphoenolpyruvate carboxykinase [GTP].